We begin with the raw amino-acid sequence, 263 residues long: Large ribosomal subunit protein uL23m (263 aa).

The transit peptide at 1–45 (MPRLTVGTKNMLYPLQKTLAVGSCKPEQVPIRSLASVVESSSKIL) directs the protein to the mitochondrion.

It belongs to the universal ribosomal protein uL23 family. As to quaternary structure, component of the mitochondrial large ribosomal subunit (mt-LSU). Mature yeast 74S mitochondrial ribosomes consist of a small (37S) and a large (54S) subunit. The 37S small subunit contains a 15S ribosomal RNA (15S mt-rRNA) and 34 different proteins. The 54S large subunit contains a 21S rRNA (21S mt-rRNA) and 46 different proteins. uL23m forms the wall of the exit tunnel. Interacts with the C-terminus of OXA1.

The protein resides in the mitochondrion. In terms of biological role, component of the mitochondrial ribosome (mitoribosome), a dedicated translation machinery responsible for the synthesis of mitochondrial genome-encoded proteins, including at least some of the essential transmembrane subunits of the mitochondrial respiratory chain. The mitoribosomes are attached to the mitochondrial inner membrane and translation products are cotranslationally integrated into the membrane. The polypeptide is Large ribosomal subunit protein uL23m (MRP20) (Saccharomyces cerevisiae (strain ATCC 204508 / S288c) (Baker's yeast)).